A 357-amino-acid polypeptide reads, in one-letter code: Quinolinate synthase (357 aa).

Residues H50 and S71 each contribute to the iminosuccinate site. A [4Fe-4S] cluster-binding site is contributed by C116. Iminosuccinate contacts are provided by residues 142 to 144 (YAN) and S159. C203 is a [4Fe-4S] cluster binding site. Iminosuccinate contacts are provided by residues 229–231 (HPE) and T246. C300 lines the [4Fe-4S] cluster pocket.

This sequence belongs to the quinolinate synthase family. Type 1 subfamily. [4Fe-4S] cluster serves as cofactor.

The protein localises to the cytoplasm. The catalysed reaction is iminosuccinate + dihydroxyacetone phosphate = quinolinate + phosphate + 2 H2O + H(+). Its pathway is cofactor biosynthesis; NAD(+) biosynthesis; quinolinate from iminoaspartate: step 1/1. Its function is as follows. Catalyzes the condensation of iminoaspartate with dihydroxyacetone phosphate to form quinolinate. In Shewanella sp. (strain MR-4), this protein is Quinolinate synthase.